The primary structure comprises 77 residues: RNA-binding protein Hfq (77 aa).

Residues 9–68 enclose the Sm domain; it reads DPFLNALRKEHIPVAIYLVNGIKLQGQIESFDQFVILLKNTVSQMVYKHAISTVVPARAI.

The protein belongs to the Hfq family. As to quaternary structure, homohexamer.

RNA chaperone that binds small regulatory RNA (sRNAs) and mRNAs to facilitate mRNA translational regulation in response to envelope stress, environmental stress and changes in metabolite concentrations. Also binds with high specificity to tRNAs. The polypeptide is RNA-binding protein Hfq (Psychromonas ingrahamii (strain DSM 17664 / CCUG 51855 / 37)).